We begin with the raw amino-acid sequence, 146 residues long: Probable calcium-binding protein CML32 (146 aa).

EF-hand domains lie at 1 to 33, 34 to 69, 73 to 108, and 109 to 144; these read MSVA…FSPS, ITSE…GGEG, DEDI…LGEK, and QTIA…NNKK. Residues D11, N13, D15, K17, E22, D47, D49, D51, Q53, E58, D86, D88, D90, K92, E97, D122, D124, D126, and E133 each contribute to the Ca(2+) site.

Its function is as follows. Potential calcium sensor. The polypeptide is Probable calcium-binding protein CML32 (CML32) (Arabidopsis thaliana (Mouse-ear cress)).